Here is a 374-residue protein sequence, read N- to C-terminus: C-X-C chemokine receptor type 5 (374 aa).

Over 1-57 (MNSPISLDMGAITYNMDDLYKELAIYSNSTEIPLQDSIFCSTEEGPLLTSFKTIFMP) the chain is Extracellular. Asn28 is a glycosylation site (N-linked (GlcNAc...) asparagine). A helical transmembrane segment spans residues 58 to 78 (VAYSLIFLLGMMGNILVLVIL). At 79–90 (ERHRHTRSSTET) the chain is on the cytoplasmic side. Residues 91–111 (FLFHLAVADLLLVFILPFAVA) form a helical membrane-spanning segment. Residues 112 to 126 (EGSVGWVLGTFLCKT) lie on the Extracellular side of the membrane. A disulfide bridge links Cys124 with Cys204. Residues 127 to 147 (VIALHKINFYCSSLLLACIAV) form a helical membrane-spanning segment. Residues 148–169 (DRYLAIVHAVHAYRRRRLLSIH) are Cytoplasmic-facing. Residues 170-190 (ITCSTIWLAGFLFALPELLFA) traverse the membrane as a helical segment. Over 191 to 221 (KVVQPHNNESLPQCIFSQENEAETRAWFASR) the chain is Extracellular. Asn198 is a glycosylation site (N-linked (GlcNAc...) asparagine). Residues 222–242 (FLYHTGGFLLPMLVMAWCYVG) form a helical membrane-spanning segment. Residues 243–261 (VVHRLLQAQRRPQRQKAVR) lie on the Cytoplasmic side of the membrane. The helical transmembrane segment at 262-282 (VAILVTSIFLLCWSPYHIVIF) threads the bilayer. Residues 283-306 (LDTLERLKAVNSSCELSGYLSVAI) are Extracellular-facing. The helical transmembrane segment at 307–327 (TLCEFLGLAHCCLNPMLYTFA) threads the bilayer. At 328-374 (GVKFRSDLSRLLTKLGCAGPASLCQLFPGWRKSSLSESENATSLTTF) the chain is on the cytoplasmic side.

The protein belongs to the G-protein coupled receptor 1 family. Expressed in neuronal and lymphatic tissue.

It is found in the cell membrane. Functionally, cytokine receptor that binds to B-lymphocyte chemoattractant (BLC). Involved in B-cell migration into B-cell follicles of spleen and Peyer patches but not into those of mesenteric or peripheral lymph nodes. This is C-X-C chemokine receptor type 5 (Cxcr5) from Rattus norvegicus (Rat).